Reading from the N-terminus, the 500-residue chain is NAD(P)H-quinone oxidoreductase chain 4, chloroplastic (500 aa).

14 consecutive transmembrane segments (helical) span residues 4-24 (FPWL…IGFL), 37-57 (ICIC…HFQL), 87-107 (MGPV…AWPV), 113-130 (LFHF…GSFS), 134-154 (LLLF…LLSL), 167-187 (FILY…GMGL), 208-228 (ALEI…SPII), 242-262 (HYST…YGLV), 272-292 (AHSI…IYAA), 305-325 (IAYS…SITD), 330-350 (GSIL…FLAG), 386-406 (LALP…GIIT), 416-436 (ILIT…SLSM), and 462-482 (LFIL…PDFV).

Belongs to the complex I subunit 4 family.

The protein resides in the plastid. It is found in the chloroplast thylakoid membrane. The enzyme catalyses a plastoquinone + NADH + (n+1) H(+)(in) = a plastoquinol + NAD(+) + n H(+)(out). It carries out the reaction a plastoquinone + NADPH + (n+1) H(+)(in) = a plastoquinol + NADP(+) + n H(+)(out). This chain is NAD(P)H-quinone oxidoreductase chain 4, chloroplastic, found in Illicium oligandrum (Star anise).